The following is a 335-amino-acid chain: Tetraacyldisaccharide 4'-kinase (335 aa).

An ATP-binding site is contributed by 58–65; that stretch reads TMGGAGKT.

The protein belongs to the LpxK family.

It carries out the reaction a lipid A disaccharide + ATP = a lipid IVA + ADP + H(+). Its pathway is glycolipid biosynthesis; lipid IV(A) biosynthesis; lipid IV(A) from (3R)-3-hydroxytetradecanoyl-[acyl-carrier-protein] and UDP-N-acetyl-alpha-D-glucosamine: step 6/6. Its function is as follows. Transfers the gamma-phosphate of ATP to the 4'-position of a tetraacyldisaccharide 1-phosphate intermediate (termed DS-1-P) to form tetraacyldisaccharide 1,4'-bis-phosphate (lipid IVA). In Caulobacter vibrioides (strain ATCC 19089 / CIP 103742 / CB 15) (Caulobacter crescentus), this protein is Tetraacyldisaccharide 4'-kinase.